The sequence spans 451 residues: Probable multidrug resistance protein NorM (451 aa).

A run of 10 helical transmembrane segments spans residues 44–66 (IAAI…GLLL), 92–109 (YWLA…LWNS), 130–147 (YIRI…FQVI), 162–179 (VIGL…YTLI), 186–208 (FNYG…FIAM), 247–269 (GFPI…LLIA), 282–304 (ALNI…SIRL), 319–341 (IILS…IILF), 391–413 (IIFI…FLAL), and 423–445 (AIGF…LFRI).

The protein belongs to the multi antimicrobial extrusion (MATE) (TC 2.A.66.1) family.

The protein resides in the cell membrane. Multidrug efflux pump. This Buchnera aphidicola subsp. Baizongia pistaciae (strain Bp) protein is Probable multidrug resistance protein NorM (norM).